The sequence spans 416 residues: Floricaula/leafy homolog 2 (416 aa).

A disordered region spans residues 154-237; that stretch reads EGLSEEPVQQ…DASGGISERQ (84 aa). Positions 210–225 are enriched in acidic residues; the sequence is AEEDEETEEGQEDDWN. 3 DNA-binding regions span residues 238-242, 307-314, and 378-381; these read REHPF, NKPKMRHY, and YVPT.

It belongs to the FLO/LFY family. Expressed in floral meristems and in indeterminate vegetative meristems.

The protein resides in the nucleus. Its function is as follows. Probable transcription factor that act to specify determinacy in the progenitor cells for both flowers and leaves. This chain is Floricaula/leafy homolog 2 (FL2), found in Nicotiana tabacum (Common tobacco).